We begin with the raw amino-acid sequence, 218 residues long: Epoxyqueuosine reductase QueH (218 aa).

[4Fe-4S] cluster contacts are provided by cysteine 22, cysteine 23, cysteine 101, and cysteine 104. A disulfide bridge links cysteine 184 with cysteine 186.

It belongs to the QueH family.

It carries out the reaction epoxyqueuosine(34) in tRNA + AH2 = queuosine(34) in tRNA + A + H2O. It participates in tRNA modification; tRNA-queuosine biosynthesis. Its function is as follows. Catalyzes the conversion of epoxyqueuosine (oQ) to queuosine (Q), which is a hypermodified base found in the wobble positions of tRNA(Asp), tRNA(Asn), tRNA(His) and tRNA(Tyr). This is Epoxyqueuosine reductase QueH from Acinetobacter baylyi (strain ATCC 33305 / BD413 / ADP1).